Here is a 169-residue protein sequence, read N- to C-terminus: Small ribosomal subunit protein bS16 (169 aa).

Positions 114-169 (AEGPTAEAITEKRRKAKEEAEAKAAAEAEAAEKAEAEAAEKAAAEAAEESEEASAE) are disordered. Basic and acidic residues predominate over residues 129-156 (AKEEAEAKAAAEAEAAEKAEAEAAEKAA). The segment covering 159–169 (AAEESEEASAE) has biased composition (acidic residues).

The protein belongs to the bacterial ribosomal protein bS16 family.

The protein is Small ribosomal subunit protein bS16 of Corynebacterium urealyticum (strain ATCC 43042 / DSM 7109).